The following is a 282-amino-acid chain: Sulfur carrier protein FdhD (282 aa).

The active-site Cysteine persulfide intermediate is C126. Residue 265–270 (FVRNNR) participates in Mo-bis(molybdopterin guanine dinucleotide) binding.

Belongs to the FdhD family.

Its subcellular location is the cytoplasm. Its function is as follows. Required for formate dehydrogenase (FDH) activity. Acts as a sulfur carrier protein that transfers sulfur from IscS to the molybdenum cofactor prior to its insertion into FDH. This is Sulfur carrier protein FdhD from Thermoplasma acidophilum (strain ATCC 25905 / DSM 1728 / JCM 9062 / NBRC 15155 / AMRC-C165).